The primary structure comprises 809 residues: WD repeat protein iqw1 (809 aa).

5 WD repeats span residues 43 to 82 (GHTG…KPRH), 87 to 128 (GHVQ…EGGM), 141 to 180 (CALD…VCNQ), 193 to 233 (PYRI…KSFR), and 241 to 295 (SPEK…LFHV). The tract at residues 599-644 (SMYTGHSDLNDDDDDYQDEESYSYASDDDDESDEDSDEGPTLLSLR) is disordered. The span at 608–636 (NDDDDDYQDEESYSYASDDDDESDEDSDE) shows a compositional bias: acidic residues. WD repeat units follow at residues 668–708 (CNVE…ILAI) and 711–750 (GDSE…PSGC).

In terms of assembly, interacts with ddb1.

The protein localises to the cytoplasm. Ligand-dependent coactivator of nuclear receptors that may function as a substrate receptor for CUL4-DDB1 E3 ubiquitin-protein ligase complex. This Schizosaccharomyces pombe (strain 972 / ATCC 24843) (Fission yeast) protein is WD repeat protein iqw1 (iqw1).